The chain runs to 455 residues: Ectonucleoside triphosphate diphosphohydrolase 6 (455 aa).

The Cytoplasmic segment spans residues 1–12; it reads MRKIPNHGTLRM. The helical; Signal-anchor for type II membrane protein transmembrane segment at 13–32 threads the bilayer; it reads TKVAYPLGLCVGLFIYVAYI. At 33–455 the chain is on the lumenal side; that stretch reads KWHRASAAQA…SLKRQKVPAL (423 aa). Residue Asn192 is glycosylated (N-linked (GlcNAc...) asparagine). Glu196 serves as the catalytic Proton acceptor. N-linked (GlcNAc...) asparagine glycosylation is present at Asn256. 2 disulfides stabilise this stretch: Cys297–Cys327 and Cys387–Cys401.

This sequence belongs to the GDA1/CD39 NTPase family. Requires Ca(2+) as cofactor. The cofactor is Mg(2+). Might be cleaved at the N-terminus, retained in an intracellular membrane compartment and in addition be released into the extracellular medium. Post-translationally, N-glycosylated. Expressed in heart and brain.

It is found in the golgi apparatus membrane. The protein localises to the secreted. It localises to the cell membrane. The catalysed reaction is a ribonucleoside 5'-diphosphate + H2O = a ribonucleoside 5'-phosphate + phosphate + H(+). The enzyme catalyses IDP + H2O = IMP + phosphate + H(+). It carries out the reaction GDP + H2O = GMP + phosphate + H(+). It catalyses the reaction UDP + H2O = UMP + phosphate + H(+). In terms of biological role, catalyzes the hydrolysis of nucleoside triphosphates and diphosphates in a calcium- or magnesium-dependent manner. Has a strong preference for nucleoside diphosphates, preferentially hydrolyzes GDP, IDP, and UDP, with slower hydrolysis of CDP, ITP, GTP, CTP, ADP, and UTP and virtually no hydrolysis of ATP. The membrane bound form might support glycosylation reactions in the Golgi apparatus and, when released from cells, might catalyze the hydrolysis of extracellular nucleotides. This is Ectonucleoside triphosphate diphosphohydrolase 6 (Entpd6) from Rattus norvegicus (Rat).